The primary structure comprises 60 residues: Sperm protamine P1 (60 aa).

Positions 1–60 (MARYRHSRSRSRSRYRRRRRRRSRYRSQRRRYRGRRRRRSRRGRRRGYSRRRYSRRRRRY) are disordered.

This sequence belongs to the protamine P1 family. Testis.

The protein resides in the nucleus. It localises to the chromosome. Its function is as follows. Protamines substitute for histones in the chromatin of sperm during the haploid phase of spermatogenesis. They compact sperm DNA into a highly condensed, stable and inactive complex. This is Sperm protamine P1 (PRM1) from Osphranter rufus (Red kangaroo).